The primary structure comprises 137 residues: Basic phospholipase A2 3 (137 aa).

The N-terminal stretch at 1-11 (LVAVCVSLLGA) is a signal peptide. Positions 12-19 (ANIPPQPL) are excised as a propeptide. Cystine bridges form between Cys-30/Cys-89, Cys-44/Cys-136, Cys-46/Cys-62, Cys-61/Cys-117, Cys-68/Cys-110, Cys-78/Cys-103, and Cys-96/Cys-108. Residues Tyr-45, Gly-47, and Gly-49 each coordinate Ca(2+). The active site involves His-65. Asp-66 contacts Ca(2+). Residue Asp-111 is part of the active site.

Belongs to the phospholipase A2 family. Group I subfamily. D49 sub-subfamily. In terms of assembly, monomer, or homotrimer. Was firstly described as a trimer, but has been reinterpreted with the possibility of being a monomer. It depends on Ca(2+) as a cofactor. As to expression, expressed by the venom gland.

The protein localises to the secreted. It catalyses the reaction a 1,2-diacyl-sn-glycero-3-phosphocholine + H2O = a 1-acyl-sn-glycero-3-phosphocholine + a fatty acid + H(+). Snake venom phospholipase A2 (PLA2) that shows anticoagulant and neurotoxic activities. PLA2 catalyzes the calcium-dependent hydrolysis of the 2-acyl groups in 3-sn-phosphoglycerides. This is Basic phospholipase A2 3 from Bungarus caeruleus (Indian krait).